Reading from the N-terminus, the 321-residue chain is MTPELRHMLRDDDLNHEEQKQVLELAIKFHHDRFYKQPFAGPQAVAVLFDKPSTRTRSSFSIGVAELGGYPLVIDKSGSQLGRGEPVADTARVLDRMAYGVVWRTFGQDRVEEMAKYSTHPVVNALTDDFHPCQILADFQTIAEHRGGVDNLKNQTIAYLGDAANNMANSYLLGGAVAGMDVRVAGPHGYLPRPDIVADAKRVAAETGGSILVTTDAKEAVKDADCVFTDTWVSMGEEAEYAIRSKPFWDYQVNTELMALAKPDALFQHCLPAYRGKEVTAEVIDGPQSVVWDEAENRLHAQKALLTWLTGKARGDESLLA.

Residues 53–56 (STRT), Gln80, Arg104, and 131–134 (HPCQ) each bind carbamoyl phosphate. Residues Asn166, Asp230, and 234-235 (SM) each bind L-ornithine. Carbamoyl phosphate is bound by residues 270–271 (CL) and Arg298.

The protein belongs to the aspartate/ornithine carbamoyltransferase superfamily. OTCase family.

It is found in the cytoplasm. It carries out the reaction carbamoyl phosphate + L-ornithine = L-citrulline + phosphate + H(+). It participates in amino-acid degradation; L-arginine degradation via ADI pathway; carbamoyl phosphate from L-arginine: step 2/2. In terms of biological role, reversibly catalyzes the transfer of the carbamoyl group from carbamoyl phosphate (CP) to the N(epsilon) atom of ornithine (ORN) to produce L-citrulline. This Bifidobacterium longum subsp. infantis (strain ATCC 15697 / DSM 20088 / JCM 1222 / NCTC 11817 / S12) protein is Ornithine carbamoyltransferase.